Here is a 336-residue protein sequence, read N- to C-terminus: Plant-specific TFIIB-related protein 2 (336 aa).

The TFIIB-type zinc finger occupies 2–34 (EEETCLDCKRPTIMVVDHSSGDTICSECGLVLE). Residues Cys-6, Cys-9, Cys-26, and Cys-29 each coordinate Zn(2+).

As to expression, specifically expressed in reproductive organs and seeds.

The protein resides in the nucleus. Plant-specific TFIIB-related protein involved in the regulation of endosperm proliferation during the syncytial phase of endosperm development. Does not contribute to RNA polymerase IV or V activities in reproductive tissues. This is Plant-specific TFIIB-related protein 2 from Arabidopsis thaliana (Mouse-ear cress).